Here is a 156-residue protein sequence, read N- to C-terminus: Small ribosomal subunit protein uS7 (156 aa).

The protein belongs to the universal ribosomal protein uS7 family. As to quaternary structure, part of the 30S ribosomal subunit. Contacts proteins S9 and S11.

Functionally, one of the primary rRNA binding proteins, it binds directly to 16S rRNA where it nucleates assembly of the head domain of the 30S subunit. Is located at the subunit interface close to the decoding center, probably blocks exit of the E-site tRNA. The protein is Small ribosomal subunit protein uS7 of Campylobacter hominis (strain ATCC BAA-381 / DSM 21671 / CCUG 45161 / LMG 19568 / NCTC 13146 / CH001A).